We begin with the raw amino-acid sequence, 523 residues long: MDFLLLGLCLHWLLRRPSGVVLCLLGACFQMLPAAPSGCPGQCRCEGRLLYCEALNLTEAPHNLSGLLGLSLRYNSLSELRAGQFTGLMQLTWLYLDHNHICSVQGDAFQKLRRVKELTLSSNQITELANTTFRPMPNLRSVDLSYNKLQALAPDLFHGLRKLTTLHMRANAIQFVPVRIFQDCRSLKFLDIGYNQLKSLARNSFAGLFKLTELHLEHNDLIKVNFAHFPRLISLNSLCLRRNKVAIVVSSLDWVWNLEKMDLSGNEIEYMEPHVFETVPYLQSLQLDSNRLTYIEPRILNSWKSLTSITLAGNLWDCGRNVCALASWLSNFQGRYDANLQCASPEYAQGEDVLDAVYAFHLCEDGAEPTSGHLLSAAVTNRSDLAPPESSATTLVDGGEGLHDSTLEPITVAIPGGEHAENAVQIHKVVTGTMALIFSFLIVVLVLYVSWKCFPASLRQLRQCFVTQRRKQKQKQTMHQMAAMSAQEYYVDYKPNHIEGALVIINEYGSCTCHQQPARECEV.

The N-terminal stretch at M1 to A34 is a signal peptide. The LRRNT domain maps to A35–N63. At A35–K428 the chain is on the extracellular side. Residues N56 and N63 are each glycosylated (N-linked (GlcNAc...) asparagine). LRR repeat units lie at residues L64–G87, M89–K111, L112–P135, M136–G159, R161–D183, C184–G207, F209–R231, I233–V255, W256–T278, and P280–S302. The N-linked (GlcNAc...) asparagine glycan is linked to N130. Residues N314 to D365 enclose the LRRCT domain. N-linked (GlcNAc...) asparagine glycosylation is present at N381. A helical membrane pass occupies residues V429–V449. Topologically, residues S450 to V523 are cytoplasmic. The short motif at E520–V523 is the May be involved in DLG4-binding element.

It belongs to the LRRTM family. As to quaternary structure, interacts with DLG4.

The protein resides in the cell membrane. It localises to the postsynaptic cell membrane. Its function is as follows. Exhibits strong synaptogenic activity, restricted to excitatory presynaptic differentiation, acting at both pre- and postsynaptic level. This Rattus norvegicus (Rat) protein is Leucine-rich repeat transmembrane neuronal protein 1 (Lrrtm1).